Reading from the N-terminus, the 896-residue chain is Translation initiation factor IF-2 (896 aa).

2 disordered regions span residues 53-81 (HGGE…SASK) and 117-301 (AEEA…ESMD). Over residues 60 to 79 (TKMTLQRKSVSTLSVGSGSA) the composition is skewed to polar residues. Over residues 117–227 (AEEAASKAKA…ESEKTGDHHV (111 aa)) the composition is skewed to basic and acidic residues. The segment covering 254-266 (ATPAPAAAPANTG) has biased composition (low complexity). Residues 273 to 282 (GKDNRRDSRN) show a composition bias toward basic and acidic residues. Residues 283–294 (ARGGRNARNNRS) are compositionally biased toward low complexity. A tr-type G domain is found at 394-563 (SRAPVVTIMG…LLEAEVLELK (170 aa)). The interval 403–410 (GHVDHGKT) is G1. 403-410 (GHVDHGKT) provides a ligand contact to GTP. Residues 428–432 (GITQH) form a G2 region. Positions 449 to 452 (DTPG) are G3. GTP-binding positions include 449–453 (DTPGH) and 503–506 (NKID). The interval 503-506 (NKID) is G4. The interval 539-541 (SAK) is G5.

The protein belongs to the TRAFAC class translation factor GTPase superfamily. Classic translation factor GTPase family. IF-2 subfamily.

It is found in the cytoplasm. Functionally, one of the essential components for the initiation of protein synthesis. Protects formylmethionyl-tRNA from spontaneous hydrolysis and promotes its binding to the 30S ribosomal subunits. Also involved in the hydrolysis of GTP during the formation of the 70S ribosomal complex. The polypeptide is Translation initiation factor IF-2 (Shewanella sediminis (strain HAW-EB3)).